We begin with the raw amino-acid sequence, 103 residues long: CLAVATA3/ESR (CLE)-related protein 16 (103 aa).

The N-terminal stretch at 1-21 (MEACSRKRRRRRAYTTSTTGY) is a signal peptide. A disordered region spans residues 71-103 (VSFTGQRREEENRDEVYKDDKRLVHTGPNPLHN). Residues 76–93 (QRREEENRDEVYKDDKRL) show a composition bias toward basic and acidic residues. Proline 98 carries the hydroxyproline modification. Residue proline 98 is glycosylated (O-linked (Ara...) hydroxyproline).

Belongs to the CLV3/ESR signal peptide family. In terms of processing, the O-glycosylation (arabinosylation) of the hydroxyproline Pro-98 enhances binding affinity of the CLE16p peptide for its receptor. In terms of tissue distribution, expressed in roots, stems, apex, seedlings, leaves, flowers and siliques.

It localises to the secreted. It is found in the extracellular space. Functionally, extracellular signal peptide that regulates cell fate. Represses root apical meristem maintenance. Regulates the transition of protophloem cells from proliferation to differentiation, thus impinging on postembryonic growth capacity of the root meristem; this signaling pathway requires CRN and CLV2. The polypeptide is CLAVATA3/ESR (CLE)-related protein 16 (Arabidopsis thaliana (Mouse-ear cress)).